A 156-amino-acid chain; its full sequence is Small ribosomal subunit protein uS7 (156 aa).

It belongs to the universal ribosomal protein uS7 family. In terms of assembly, part of the 30S ribosomal subunit. Contacts proteins S9 and S11.

Its function is as follows. One of the primary rRNA binding proteins, it binds directly to 16S rRNA where it nucleates assembly of the head domain of the 30S subunit. Is located at the subunit interface close to the decoding center, probably blocks exit of the E-site tRNA. This Crocosphaera subtropica (strain ATCC 51142 / BH68) (Cyanothece sp. (strain ATCC 51142)) protein is Small ribosomal subunit protein uS7.